We begin with the raw amino-acid sequence, 441 residues long: Glutamate--tRNA ligase 1 (441 aa).

The short motif at 8 to 18 (PSPTGHIHVGN) is the 'HIGH' region element. Positions 239–243 (ELSKR) match the 'KMSKS' region motif. K242 is a binding site for ATP.

The protein belongs to the class-I aminoacyl-tRNA synthetase family. Glutamate--tRNA ligase type 1 subfamily. In terms of assembly, monomer.

The protein resides in the cytoplasm. It carries out the reaction tRNA(Glu) + L-glutamate + ATP = L-glutamyl-tRNA(Glu) + AMP + diphosphate. Its function is as follows. Catalyzes the attachment of glutamate to tRNA(Glu) in a two-step reaction: glutamate is first activated by ATP to form Glu-AMP and then transferred to the acceptor end of tRNA(Glu). The sequence is that of Glutamate--tRNA ligase 1 from Paracoccus denitrificans (strain Pd 1222).